A 196-amino-acid chain; its full sequence is Neuropeptide prohormone-4 (196 aa).

Positions 1-25 are cleaved as a signal peptide; that stretch reads MSSPLRMDVTFLLAAIAVTWVCGLK. Residues 50 to 90 form the LDL-receptor class A domain; it reads DCDIASPFKCEESPTCLRLFQVCNGRWDCEHGSDEDNALCA. Disulfide bonds link C51/C65, C59/C78, and C72/C89.

In terms of tissue distribution, expressed by the venom duct.

It is found in the secreted. The polypeptide is Neuropeptide prohormone-4 (Conus victoriae (Queen Victoria cone)).